Reading from the N-terminus, the 292-residue chain is NAD kinase (292 aa).

The active-site Proton acceptor is D73. Residues D73–G74, N147–E148, H158, R175, D177, T188–S193, and Q247 each bind NAD(+).

It belongs to the NAD kinase family. Requires a divalent metal cation as cofactor.

The protein resides in the cytoplasm. The enzyme catalyses NAD(+) + ATP = ADP + NADP(+) + H(+). Functionally, involved in the regulation of the intracellular balance of NAD and NADP, and is a key enzyme in the biosynthesis of NADP. Catalyzes specifically the phosphorylation on 2'-hydroxyl of the adenosine moiety of NAD to yield NADP. In Buchnera aphidicola subsp. Schizaphis graminum (strain Sg), this protein is NAD kinase.